The primary structure comprises 333 residues: Protein SEEDLING LETHAL 1, chloroplastic (333 aa).

The transit peptide at 1-55 (MQQEALSFLSSSLPSLHHNFPSLSRLRFNNFPALSFKPNTSSSSSSFFKSPDIPS) directs the protein to the chloroplast. A disordered region spans residues 38–67 (PNTSSSSSSFFKSPDIPSLSSTTTTTTTTE).

This sequence belongs to the mTERF family. Self-interacts. Associates with the plastid-encoded RNA polymerase (PEP) complex. Interacts directly with PTAC7/PAP12, PTAC12/HMR/PAP5 and PTAC14/PAP7. Expressed in green aerial tissues such as cotyledons, leaves, flowers and siliques, but not in roots.

The protein localises to the plastid. It localises to the chloroplast stroma. It is found in the chloroplast nucleoid. In terms of biological role, transcription termination factor required for chloroplast gene expression and protein synthesis in chloroplasts. Necessary for chloroplast photosynthetic complexes assembly by modulating the accumulation of photosynthetic proteins. Essential for embryogenesis. The protein is Protein SEEDLING LETHAL 1, chloroplastic of Arabidopsis thaliana (Mouse-ear cress).